The sequence spans 293 residues: MQKGPLSLATVSHTETFWRKVGPKRDGLGTGDGLHSWVLQEPVSTGDNPRECDSQGTSKDTLVREGKTYKCKECGKVFNKNSLLVRHHQIHAGVKTYECQECGKAFHEKVDFVRHMRIHSGEKPCKCVECGKVFNRRSHLLCYHQIHTGEKPYECSECGKTFSYHSVFIQHRMTHTGEKLFGCKECGKTFYYNSSLTRHMKIHTGEKPYKCGECGKTFTYHSVFFRHSMTHTAGKPYECKECGKGFYYSYSLTRHTRSHTGEKPYECLEHRKAFGYHSAFAQQSKIHSGGKNL.

C2H2-type zinc fingers lie at residues 69–91 (YKCK…HQIH) and 97–119 (YECQ…MRIH). The C2H2-type 3; atypical zinc-finger motif lies at 125–147 (CKCVECGKVFNRRSHLLCYHQIH). C2H2-type zinc fingers lie at residues 153 to 175 (YECS…RMTH), 181 to 203 (FGCK…MKIH), 209 to 231 (YKCG…SMTH), and 237 to 259 (YECK…TRSH).

Belongs to the krueppel C2H2-type zinc-finger protein family.

It localises to the nucleus. May be involved in transcriptional regulation. This is Zinc finger protein 80 (ZNF80) from Macaca mulatta (Rhesus macaque).